A 209-amino-acid polypeptide reads, in one-letter code: MKRLWDISPPVSADSPVFPGDTPYRQQWKWSLTPDCPVNVSEITLSPHIGAHADAPLHYENGAAAIGAVALEPFLGPCRVIHAIGCGPLILPEHLAHAQAGLPPRVLVRTARHAALQWWVDDFSAYAPQTIEWLAGRGVTLIGIDTPSIDPASSKTLDSHHAIRRHDMRVLENLRLDDVDEGDYELIALPLALVQADASPVRAVLRELA.

F18 contacts substrate. The Zn(2+) site is built by H48, H52, and D54. Catalysis depends on H58, which acts as the Proton donor/acceptor. Residues H160 and E172 each contribute to the Zn(2+) site.

The protein belongs to the Cyclase 1 superfamily. KynB family. As to quaternary structure, homodimer. The cofactor is Zn(2+).

The catalysed reaction is N-formyl-L-kynurenine + H2O = L-kynurenine + formate + H(+). Its pathway is amino-acid degradation; L-tryptophan degradation via kynurenine pathway; L-kynurenine from L-tryptophan: step 2/2. Its function is as follows. Catalyzes the hydrolysis of N-formyl-L-kynurenine to L-kynurenine, the second step in the kynurenine pathway of tryptophan degradation. The polypeptide is Kynurenine formamidase (Bordetella bronchiseptica (strain ATCC BAA-588 / NCTC 13252 / RB50) (Alcaligenes bronchisepticus)).